Here is a 156-residue protein sequence, read N- to C-terminus: Small ribosomal subunit protein uS7c (156 aa).

The protein belongs to the universal ribosomal protein uS7 family. As to quaternary structure, part of the 30S ribosomal subunit.

The protein resides in the plastid. It is found in the chloroplast. Functionally, one of the primary rRNA binding proteins, it binds directly to 16S rRNA where it nucleates assembly of the head domain of the 30S subunit. This chain is Small ribosomal subunit protein uS7c (rps7), found in Cycas revoluta (Sago palm).